We begin with the raw amino-acid sequence, 366 residues long: 5-formaminoimidazole-4-carboxamide-1-(beta)-D-ribofuranosyl 5'-monophosphate synthetase (366 aa).

His-27 and Ser-96 together coordinate 5-amino-1-(5-phospho-beta-D-ribosyl)imidazole-4-carboxamide. Residues 131 to 357 (RKWLEDAGVP…IAREIKEAVK (227 aa)) enclose the ATP-grasp domain. ATP-binding positions include 154–208 (PVIV…VRFY) and Glu-239. Residue Asn-263 coordinates 5-amino-1-(5-phospho-beta-D-ribosyl)imidazole-4-carboxamide. Residues Glu-302 and Glu-315 each coordinate Mg(2+).

Belongs to the phosphohexose mutase family. Mg(2+) serves as cofactor. Requires Mn(2+) as cofactor.

The catalysed reaction is 5-amino-1-(5-phospho-beta-D-ribosyl)imidazole-4-carboxamide + formate + ATP = 5-formamido-1-(5-phospho-D-ribosyl)imidazole-4-carboxamide + ADP + phosphate. It functions in the pathway purine metabolism; IMP biosynthesis via de novo pathway; 5-formamido-1-(5-phospho-D-ribosyl)imidazole-4-carboxamide from 5-amino-1-(5-phospho-D-ribosyl)imidazole-4-carboxamide (formate route): step 1/1. Its function is as follows. Catalyzes the ATP- and formate-dependent formylation of 5-aminoimidazole-4-carboxamide-1-beta-d-ribofuranosyl 5'-monophosphate (AICAR) to 5-formaminoimidazole-4-carboxamide-1-beta-d-ribofuranosyl 5'-monophosphate (FAICAR) in the absence of folates. In Korarchaeum cryptofilum (strain OPF8), this protein is 5-formaminoimidazole-4-carboxamide-1-(beta)-D-ribofuranosyl 5'-monophosphate synthetase.